The chain runs to 315 residues: Acetaldehyde dehydrogenase 2 (315 aa).

15–18 (SGNI) contacts NAD(+). The Acyl-thioester intermediate role is filled by Cys-135. Residues 166–174 (SAGPGTRAN) and Asn-293 contribute to the NAD(+) site.

It belongs to the acetaldehyde dehydrogenase family.

The catalysed reaction is acetaldehyde + NAD(+) + CoA = acetyl-CoA + NADH + H(+). This chain is Acetaldehyde dehydrogenase 2, found in Paraburkholderia phymatum (strain DSM 17167 / CIP 108236 / LMG 21445 / STM815) (Burkholderia phymatum).